The chain runs to 350 residues: F(420)H(2) dehydrogenase subunit H (350 aa).

8 helical membrane passes run 21–41 (GTVG…AVWI), 94–114 (VFML…AVFI), 128–148 (ISIL…FMAA), 173–193 (PLGI…IIDI), 200–220 (FVWN…ALMA), 261–281 (ILGS…PAFV), 288–308 (GLIA…MTII), and 330–350 (LLPL…YLGA).

The protein belongs to the complex I subunit 1 family. In terms of assembly, the FPO complex is composed of at least 13 different subunits. FpoA, FpoH, FpoJ, FpoK, FpoL, FpoM and FpoN proteins constitute the membrane sector of the complex.

It localises to the cell membrane. It catalyses the reaction methanophenazine + reduced coenzyme F420-(gamma-L-Glu)(n) = dihydromethanophenazine + oxidized coenzyme F420-(gamma-L-Glu)(n) + H(+). Its function is as follows. Component of the F(420)H(2) dehydrogenase (FPO complex) which is part of the energy-conserving F(420)H(2):heterodisulfide oxidoreductase system. The membrane-bound electron transfer system of the complex plays an important role in the metabolism of methylotrophic methanogens when the organisms grow on methanol or methylamines. Catalyzes the oxidation of methanophenazine to dihydromethanophenazine. It shuttles electrons from F(420)H(2), via FAD and iron-sulfur (Fe-S) centers, to methanophenazine (an electron carrier in the membrane). It couples the redox reaction to proton translocation (for every two electrons transferred, two hydrogen ions are translocated across the cytoplasmic membrane), and thus conserves the redox energy in a proton gradient. It also catalyzes the oxidation of F(420)H(2) with quinones such as 2,3-dimethyl-1,4-naphthoquinone, 2-methyl-1,4-naphthoquinone and tetramethyl-p-benzoquinone. The protein is F(420)H(2) dehydrogenase subunit H of Methanosarcina mazei (strain ATCC BAA-159 / DSM 3647 / Goe1 / Go1 / JCM 11833 / OCM 88) (Methanosarcina frisia).